The primary structure comprises 527 residues: MNQLSLKLSMSIIKIIIMATKKIQLDNFIESQNKLYSFTKEKLFTDVTIVLDDGNCQTTLDLHKAVLASKCTYFYNLFTKFSESKQSVIKINVANSYVTANIIASFYSQNTDTRNYPHWKYYLLEIMCLDFLGLEYDLEYFSKIQVPVEGFELLLDVVDIIGYTSDTIPIIARNLPHDYDFTKFPMELIEQLIKYVYSFDIILVNSNGIIDFFNIHGDKIKSISTFFTNNDIKYYTSHKINDELIVVFADNIVNVWNIKNSVVEASLEYPVNVKTRFEHFCYLPSNNHLISTSSYNIYVWDLSTNKLIKTVKKHKNTITGIHVSPVNDSQFVTIGRDDRICIWNAKTYNIVRCMISPVDCICYSSSGRELVIVNKHYIKVFNVSDGTFLFKMKINLNKSPNNIINSSYGKYIINYDAYIKIFYYPPNHLNDCTDIYCPSNYTQGIYTPDKKYLIMNRSDEDYYDVYDNSVAKDNKYVCNSFRIGKHVSRVFMFKDSSIGLFIVKNSLTSLYENLTSLMQLQTQEYFP.

The region spanning 45-115 (TDVTIVLDDG…FYSQNTDTRN (71 aa)) is the BTB domain. 5 WD repeats span residues 215–266 (IHGD…VEAS), 272–310 (NVKTRFEHFCYLPSNNHLISTSSYNIYVWDLSTNKLIKT), 313–353 (KHKN…IVRC), 355–391 (ISPVDCICYSSSGRELVIVNKHYIKVFNVSDGTFLFK), and 436–476 (YCPS…DNKY).

Belongs to the mimivirus BTB/WD family.

This chain is Putative BTB/POZ domain and WD-repeat protein R783, found in Acanthamoeba polyphaga (Amoeba).